The primary structure comprises 107 residues: uncharacterized protein (107 aa).

This is an uncharacterized protein from Autographa californica nuclear polyhedrosis virus (AcMNPV).